A 162-amino-acid chain; its full sequence is ATP synthase subunit b (162 aa).

A helical membrane pass occupies residues 6–26 (PDIGLLFWMLLSFGIVFFVAA).

It belongs to the ATPase B chain family. F-type ATPases have 2 components, F(1) - the catalytic core - and F(0) - the membrane proton channel. F(1) has five subunits: alpha(3), beta(3), gamma(1), delta(1), epsilon(1). F(0) has three main subunits: a(1), b(2) and c(10-14). The alpha and beta chains form an alternating ring which encloses part of the gamma chain. F(1) is attached to F(0) by a central stalk formed by the gamma and epsilon chains, while a peripheral stalk is formed by the delta and b chains.

It is found in the cell inner membrane. In terms of biological role, f(1)F(0) ATP synthase produces ATP from ADP in the presence of a proton or sodium gradient. F-type ATPases consist of two structural domains, F(1) containing the extramembraneous catalytic core and F(0) containing the membrane proton channel, linked together by a central stalk and a peripheral stalk. During catalysis, ATP synthesis in the catalytic domain of F(1) is coupled via a rotary mechanism of the central stalk subunits to proton translocation. Its function is as follows. Component of the F(0) channel, it forms part of the peripheral stalk, linking F(1) to F(0). This chain is ATP synthase subunit b, found in Azobacteroides pseudotrichonymphae genomovar. CFP2.